The sequence spans 393 residues: Fasciculation and elongation protein zeta-1 (393 aa).

The interval 1-41 (MEAPLVSLDEEFEDIRPCCTEDPEEKPQSLYGTSPHHLEDP) is disordered. Phosphoserine is present on Ser-58. The tract at residues 130–154 (NGNSSDTEIHEKEEEDEFIEKSEND) is disordered. Residues 231–299 (SELTELLDQV…KKRRKEKGLS (69 aa)) are a coiled coil. Ser-299 and Ser-317 each carry phosphoserine.

It belongs to the zygin family. As to quaternary structure, homodimer. Interacts with UBE4B and SAP30L. Interacts with SCOC and ULK1; SCOC interferes with ULK1-binding to FEZ1. Directly interacts with SCOC and UVRAG. Stabilizes the interaction between SCOC and UVRAG during amino acid starvation. Interacts with the NH2-terminal variable region (V1) of PKC zeta and weakly with that of PKC epsilon. Phosphorylated by protein kinase C zeta; which enhances interaction with UBE4B and polyubiquitination. In terms of processing, polyubiquitinated in a UBE4B-dependent manner; which does not lead to proteasomal degradation and may be important for neurogenic activity. Polyubiquitin linkage seems to be mainly through Lys-26. In terms of tissue distribution, brain.

It localises to the cytoplasm. The protein resides in the cytoskeleton. It is found in the microtubule organizing center. The protein localises to the centrosome. Its subcellular location is the cell membrane. Functionally, may be involved in axonal outgrowth as component of the network of molecules that regulate cellular morphology and axon guidance machinery. May participate in the transport of mitochondria and other cargos along microtubules. The protein is Fasciculation and elongation protein zeta-1 (Fez1) of Rattus norvegicus (Rat).